We begin with the raw amino-acid sequence, 119 residues long: Large ribosomal subunit protein bL20c (119 aa).

The protein belongs to the bacterial ribosomal protein bL20 family.

The protein resides in the plastid. The protein localises to the chloroplast. Its function is as follows. Binds directly to 23S ribosomal RNA and is necessary for the in vitro assembly process of the 50S ribosomal subunit. It is not involved in the protein synthesizing functions of that subunit. The chain is Large ribosomal subunit protein bL20c from Lolium perenne (Perennial ryegrass).